Reading from the N-terminus, the 246-residue chain is Probable hydroxyethylthiazole kinase (246 aa).

Met50 is a binding site for substrate. Positions 125 and 145 each coordinate ATP. Gly172 serves as a coordination point for substrate.

This sequence belongs to the Thz kinase family. Mg(2+) serves as cofactor.

It carries out the reaction 5-(2-hydroxyethyl)-4-methylthiazole + ATP = 4-methyl-5-(2-phosphooxyethyl)-thiazole + ADP + H(+). Its pathway is cofactor biosynthesis; thiamine diphosphate biosynthesis; 4-methyl-5-(2-phosphoethyl)-thiazole from 5-(2-hydroxyethyl)-4-methylthiazole: step 1/1. Catalyzes the phosphorylation of the hydroxyl group of 4-methyl-5-beta-hydroxyethylthiazole (THZ). This Agrobacterium fabrum (strain C58 / ATCC 33970) (Agrobacterium tumefaciens (strain C58)) protein is Probable hydroxyethylthiazole kinase (thiM).